Reading from the N-terminus, the 362-residue chain is Innexin inx1 (362 aa).

The Cytoplasmic portion of the chain corresponds to 1 to 28; the sequence is MYKLLGSLKSYLKWQDIQTDNAVFRLHN. A helical membrane pass occupies residues 29 to 49; sequence SFTTVLLLTCSLIITATQYVG. The Extracellular portion of the chain corresponds to 50 to 110; the sequence is QPISCIVNGV…DAKKYYTYYQ (61 aa). A helical membrane pass occupies residues 111–131; sequence WVCFVLFFQAMACYTPKFLWN. Over 132 to 177 the chain is Cytoplasmic; sequence KFEGGLMRMIVMGLNITICTREEKEAKRDALLDYLIKHVKRHKLYA. Residues 178–198 form a helical membrane-spanning segment; it reads IRYWACEFLCCINIIVQMYLM. Residues 199–267 are Extracellular-facing; it reads NRFFDGEFLS…LPLNIVNEKT (69 aa). Residues 268–288 form a helical membrane-spanning segment; it reads YVFIWFWFWILLVLLIGLIVF. Residues 289-362 lie on the Cytoplasmic side of the membrane; sequence RGCIIFMPKF…VEPSKHDRAK (74 aa).

It belongs to the pannexin family. In terms of assembly, heterooligomer of Inx2 and ogre. As to expression, in ovary, expressed in follicle cells. Expressed around the periphery of the embryo during cellular blastoderm formation. Repeating epidermal pattern emerges from stage 11, high levels of expression detected along the borders of each segment from stage 13. At stage 13, expressed in the dorsal branch of the tracheal system. During stage 15, detected in a few cells at each of the branch points of the dorsal trunk and at low levels in cardioblasts. In embryos, also expressed in the salivary gland and the hindgut (at protein level). At stage 17, expressed in the dorsal side of the CNS. Expressed in the imaginal wing disk. Expressed in larval CNS and in tissues outside of the CNS. In pupae, expressed in the CNS and in primary, secondary and tertiary pigment cells of the retina.

Its subcellular location is the cell membrane. The protein resides in the cell junction. The protein localises to the gap junction. It localises to the basolateral cell membrane. Structural component of the gap junctions. Essential for generation and/or maintenance of postembryonic neuroblasts and normal development of optic lobe. This Drosophila melanogaster (Fruit fly) protein is Innexin inx1 (ogre).